A 198-amino-acid polypeptide reads, in one-letter code: Phosphoheptose isomerase (198 aa).

The SIS domain occupies 36–198 (MARALGADRK…DRTLFGGPGG (163 aa)). A substrate-binding site is contributed by 51 to 53 (NGG). 2 residues coordinate Zn(2+): His60 and Glu64. Residues Glu64, 93–94 (ND), 119–121 (STS), Ser124, and Gln174 contribute to the substrate site. Residues Gln174 and His182 each coordinate Zn(2+).

It belongs to the SIS family. GmhA subfamily. As to quaternary structure, homotetramer. Zn(2+) serves as cofactor.

Its subcellular location is the cytoplasm. It carries out the reaction 2 D-sedoheptulose 7-phosphate = D-glycero-alpha-D-manno-heptose 7-phosphate + D-glycero-beta-D-manno-heptose 7-phosphate. It functions in the pathway carbohydrate biosynthesis; D-glycero-D-manno-heptose 7-phosphate biosynthesis; D-glycero-alpha-D-manno-heptose 7-phosphate and D-glycero-beta-D-manno-heptose 7-phosphate from sedoheptulose 7-phosphate: step 1/1. Catalyzes the isomerization of sedoheptulose 7-phosphate in D-glycero-D-manno-heptose 7-phosphate. The sequence is that of Phosphoheptose isomerase from Halorhodospira halophila (strain DSM 244 / SL1) (Ectothiorhodospira halophila (strain DSM 244 / SL1)).